The primary structure comprises 325 residues: VSG expression site-associated protein 117A (325 aa).

The signal sequence occupies residues 1-23 (MKVTIVELVVWLFSVNFFVVVAE). N-linked (GlcNAc...) asparagine glycans are attached at residues Asn-72, Asn-290, and Asn-313.

Its function is as follows. Not known but may be related to activation of the variant surface glycoprotein genes. The protein is VSG expression site-associated protein 117A of Trypanosoma brucei brucei.